A 171-amino-acid polypeptide reads, in one-letter code: MMRTVQLRTLRPCIRAQQQPVRAPTSVAAATATTPAPTKKCPFSLFAKLGGREAVEAAVDKFYNKVVADPTVSVFFSKTDMKVQRSKQFAFLAYALGGAAEWKGKDMRTAHKDLVPHLTDVHFQAVVRHLSDTLAELGVTPGDIADAMAVVASTKTEVLNMPRQQGAESNR.

A chloroplast-targeting transit peptide spans 1–23 (MMRTVQLRTLRPCIRAQQQPVRA). Y63 and H111 together coordinate heme.

This sequence belongs to the truncated hemoglobin family. Group I subfamily. The cofactor is heme.

Its subcellular location is the plastid. It localises to the chloroplast. The sequence is that of Group 1 truncated hemoglobin LI410 (LI410) from Chlamydomonas moewusii (Chlamydomonas eugametos).